The primary structure comprises 463 residues: Kynureninase 2 (463 aa).

Pyridoxal 5'-phosphate contacts are provided by residues L134, T135, 162–165 (FPSD), D247, H250, and Y272. K273 carries the post-translational modification N6-(pyridoxal phosphate)lysine. Positions 312 and 340 each coordinate pyridoxal 5'-phosphate.

It belongs to the kynureninase family. Homodimer. Requires pyridoxal 5'-phosphate as cofactor.

The protein localises to the cytoplasm. The enzyme catalyses L-kynurenine + H2O = anthranilate + L-alanine + H(+). It catalyses the reaction 3-hydroxy-L-kynurenine + H2O = 3-hydroxyanthranilate + L-alanine + H(+). It functions in the pathway amino-acid degradation; L-kynurenine degradation; L-alanine and anthranilate from L-kynurenine: step 1/1. Its pathway is cofactor biosynthesis; NAD(+) biosynthesis; quinolinate from L-kynurenine: step 2/3. Catalyzes the cleavage of L-kynurenine (L-Kyn) and L-3-hydroxykynurenine (L-3OHKyn) into anthranilic acid (AA) and 3-hydroxyanthranilic acid (3-OHAA), respectively. In Aspergillus terreus (strain NIH 2624 / FGSC A1156), this protein is Kynureninase 2 (bna5-2).